The sequence spans 510 residues: NKAP family protein (510 aa).

Over residues 1-22 (MSHRERDRDRDRDSDRDRDRNR) the composition is skewed to basic and acidic residues. 3 disordered regions span residues 1–128 (MSHR…VEIQ), 149–220 (ERKD…NYNG), and 239–401 (VYER…PISE). Residues 23 to 39 (YSRSRSRGSRSRSRSRS) are compositionally biased toward basic residues. The span at 40 to 89 (RSRDRNRNRDYNKDRSSNRDSYYNDRDYKKDRSSNRDRDYYDRDRNRDYK) shows a compositional bias: basic and acidic residues. The segment covering 96-105 (SSGGGGGGSG) has biased composition (gly residues). Low complexity-rich tracts occupy residues 112–123 (SSSYRESNSNNS) and 184–219 (NNNN…SNYN). Positions 262-273 (NKKKSKKSRRKS) are enriched in basic residues. A compositionally biased stretch (low complexity) spans 274–283 (SSNSDSSSSD). A compositionally biased stretch (basic residues) spans 292–322 (REKRKKSKSRKDKKKRKEKKKHQRKSSKRSS). Residues 342 to 351 (DSDRSDSEGR) are compositionally biased toward basic and acidic residues. Over residues 352–367 (SRKKRSKKRSKKRHDH) the composition is skewed to basic residues. Positions 368–383 (HKESVHDASMWEEKVE) are enriched in basic and acidic residues.

This sequence belongs to the NKAP family.

The protein is NKAP family protein of Dictyostelium discoideum (Social amoeba).